Reading from the N-terminus, the 209-residue chain is ATP-dependent Clp protease proteolytic subunit 2 (209 aa).

Catalysis depends on S107, which acts as the Nucleophile. The active site involves H132.

It belongs to the peptidase S14 family. Fourteen ClpP subunits assemble into 2 heptameric rings which stack back to back to give a disk-like structure with a central cavity, resembling the structure of eukaryotic proteasomes.

It localises to the cytoplasm. The catalysed reaction is Hydrolysis of proteins to small peptides in the presence of ATP and magnesium. alpha-casein is the usual test substrate. In the absence of ATP, only oligopeptides shorter than five residues are hydrolyzed (such as succinyl-Leu-Tyr-|-NHMec, and Leu-Tyr-Leu-|-Tyr-Trp, in which cleavage of the -Tyr-|-Leu- and -Tyr-|-Trp bonds also occurs).. Cleaves peptides in various proteins in a process that requires ATP hydrolysis. Has a chymotrypsin-like activity. Plays a major role in the degradation of misfolded proteins. In Corynebacterium jeikeium (strain K411), this protein is ATP-dependent Clp protease proteolytic subunit 2.